Reading from the N-terminus, the 189-residue chain is Prophage DNA-packing protein NohA (189 aa).

The protein belongs to the terminase small subunit family.

The chain is Prophage DNA-packing protein NohA (nohA) from Escherichia coli (strain K12).